We begin with the raw amino-acid sequence, 297 residues long: Homoserine kinase (297 aa).

85 to 95 (PPTRGMGSSSA) is a binding site for ATP.

This sequence belongs to the GHMP kinase family. Homoserine kinase subfamily.

Its subcellular location is the cytoplasm. The enzyme catalyses L-homoserine + ATP = O-phospho-L-homoserine + ADP + H(+). It functions in the pathway amino-acid biosynthesis; L-threonine biosynthesis; L-threonine from L-aspartate: step 4/5. Its function is as follows. Catalyzes the ATP-dependent phosphorylation of L-homoserine to L-homoserine phosphate. The protein is Homoserine kinase of Desulfitobacterium hafniense (strain DSM 10664 / DCB-2).